The chain runs to 748 residues: Methylmalonyl-CoA mutase, mitochondrial (748 aa).

The transit peptide at 1 to 30 (MLRAKNQLFLLSPHYLKQLNIPSASRWKRL) directs the protein to the mitochondrion. Gln-48 serves as a coordination point for malonyl-CoA. Position 87 is an N6-acetyllysine (Lys-87). Residues 94 to 97 (YPTM) and 104 to 108 (TIRQY) contribute to the malonyl-CoA site. The residue at position 210 (Lys-210) is an N6-acetyllysine. Residues 214–216 (TIQ), Arg-226, Lys-253, His-263, and 302–304 (RLS) contribute to the malonyl-CoA site. Lys-333 is modified (N6-acetyllysine). Lys-341 is modified (N6-succinyllysine). At Ser-479 the chain carries Phosphoserine. Lys-593 carries the N6-succinyllysine modification. Lys-600 is modified (N6-acetyllysine). One can recognise a B12-binding domain in the interval 612-744 (RPRLLVAKMG…DDIEKCLAEK (133 aa)). His-625 lines the adenosylcob(III)alamin pocket.

The protein belongs to the methylmalonyl-CoA mutase family. Homodimer. Interacts (the apoenzyme form) with MMAA; the interaction is GTP dependent. The cofactor is adenosylcob(III)alamin.

The protein resides in the mitochondrion matrix. The protein localises to the mitochondrion. It localises to the cytoplasm. It catalyses the reaction (R)-methylmalonyl-CoA = succinyl-CoA. With respect to regulation, inhibited by itaconyl-CoA, a metabolite that inactivates the coenzyme B12 cofactor. Catalyzes the reversible isomerization of methylmalonyl-CoA (MMCoA) (generated from branched-chain amino acid metabolism and degradation of dietary odd chain fatty acids and cholesterol) to succinyl-CoA (3-carboxypropionyl-CoA), a key intermediate of the tricarboxylic acid cycle. The sequence is that of Methylmalonyl-CoA mutase, mitochondrial (Mmut) from Mus musculus (Mouse).